The following is a 338-amino-acid chain: Glyceraldehyde-3-phosphate dehydrogenase (338 aa).

Residues 12–13, Asp-34, and Arg-79 each bind NAD(+); that span reads RI. Residues 150-152, Thr-181, 210-211, and Arg-233 each bind D-glyceraldehyde 3-phosphate; these read SCT and TG. Catalysis depends on Cys-151, which acts as the Nucleophile. Residue Asn-316 coordinates NAD(+).

It belongs to the glyceraldehyde-3-phosphate dehydrogenase family. As to quaternary structure, homotetramer.

It is found in the cytoplasm. It catalyses the reaction D-glyceraldehyde 3-phosphate + phosphate + NAD(+) = (2R)-3-phospho-glyceroyl phosphate + NADH + H(+). It participates in carbohydrate degradation; glycolysis; pyruvate from D-glyceraldehyde 3-phosphate: step 1/5. The sequence is that of Glyceraldehyde-3-phosphate dehydrogenase (GPD) from Phaffia rhodozyma (Yeast).